The sequence spans 354 residues: uncharacterized protein (354 aa).

An N-terminal signal peptide occupies residues M1 to A21. C22 is lipidated: N-palmitoyl cysteine. A lipid anchor (S-diacylglycerol cysteine) is attached at C22.

It localises to the cell membrane. The protein localises to the membrane raft. This is an uncharacterized protein from Bacillus subtilis (strain 168).